The chain runs to 94 residues: Large ribosomal subunit protein uL23 (94 aa).

It belongs to the universal ribosomal protein uL23 family. In terms of assembly, part of the 50S ribosomal subunit. Contacts protein L29, and trigger factor when it is bound to the ribosome.

Its function is as follows. One of the early assembly proteins it binds 23S rRNA. One of the proteins that surrounds the polypeptide exit tunnel on the outside of the ribosome. Forms the main docking site for trigger factor binding to the ribosome. This Pelobacter propionicus (strain DSM 2379 / NBRC 103807 / OttBd1) protein is Large ribosomal subunit protein uL23.